The primary structure comprises 188 residues: Pyridoxal 5'-phosphate synthase subunit PdxT (188 aa).

46 to 48 provides a ligand contact to L-glutamine; that stretch reads GES. The active-site Nucleophile is the cysteine 78. L-glutamine contacts are provided by residues arginine 106 and 132-133; that span reads IR. Catalysis depends on charge relay system residues histidine 169 and glutamate 171.

The protein belongs to the glutaminase PdxT/SNO family. In terms of assembly, in the presence of PdxS, forms a dodecamer of heterodimers. Only shows activity in the heterodimer.

It carries out the reaction aldehydo-D-ribose 5-phosphate + D-glyceraldehyde 3-phosphate + L-glutamine = pyridoxal 5'-phosphate + L-glutamate + phosphate + 3 H2O + H(+). The catalysed reaction is L-glutamine + H2O = L-glutamate + NH4(+). It functions in the pathway cofactor biosynthesis; pyridoxal 5'-phosphate biosynthesis. Its function is as follows. Catalyzes the hydrolysis of glutamine to glutamate and ammonia as part of the biosynthesis of pyridoxal 5'-phosphate. The resulting ammonia molecule is channeled to the active site of PdxS. This is Pyridoxal 5'-phosphate synthase subunit PdxT from Tropheryma whipplei (strain Twist) (Whipple's bacillus).